The following is a 179-amino-acid chain: Acireductone dioxygenase (179 aa).

The interval 7–26 (MDDAPGDPRQPHRPDPGRPV) is disordered. Fe(2+) is bound by residues His88, His90, Glu94, and His133. Ni(2+) is bound by residues His88, His90, Glu94, and His133.

The protein belongs to the acireductone dioxygenase (ARD) family. Monomer. Interacts with MMP14. Fe(2+) is required as a cofactor. Ni(2+) serves as cofactor. Detected in heart, colon, lung, stomach, brain, spleen, liver, skeletal muscle and kidney.

The protein localises to the cytoplasm. It localises to the nucleus. It is found in the cell membrane. The catalysed reaction is 1,2-dihydroxy-5-(methylsulfanyl)pent-1-en-3-one + O2 = 4-methylsulfanyl-2-oxobutanoate + formate + 2 H(+). It catalyses the reaction 1,2-dihydroxy-5-(methylsulfanyl)pent-1-en-3-one + O2 = 3-(methylsulfanyl)propanoate + CO + formate + 2 H(+). The protein operates within amino-acid biosynthesis; L-methionine biosynthesis via salvage pathway; L-methionine from S-methyl-5-thio-alpha-D-ribose 1-phosphate: step 5/6. In terms of biological role, catalyzes 2 different reactions between oxygen and the acireductone 1,2-dihydroxy-3-keto-5-methylthiopentene (DHK-MTPene) depending upon the metal bound in the active site. Fe-containing acireductone dioxygenase (Fe-ARD) produces formate and 2-keto-4-methylthiobutyrate (KMTB), the alpha-ketoacid precursor of methionine in the methionine recycle pathway. Ni-containing acireductone dioxygenase (Ni-ARD) produces methylthiopropionate, carbon monoxide and formate, and does not lie on the methionine recycle pathway. Also down-regulates cell migration mediated by MMP14. Necessary for hepatitis C virus replication in an otherwise non-permissive cell line. The chain is Acireductone dioxygenase from Homo sapiens (Human).